The chain runs to 198 residues: Synaptobrevin homolog YKT6-B (198 aa).

In terms of domain architecture, Longin spans 8 to 127 (VLYKGENKVH…IQYNALDSYL (120 aa)). The region spanning 138 to 198 (PMSKVQAELD…RKQNSCCDIM (61 aa)) is the v-SNARE coiled-coil homology domain. A lipid anchor (S-palmitoyl cysteine) is attached at C194. C195 carries the post-translational modification Cysteine methyl ester. C195 carries the S-farnesyl cysteine lipid modification. Residues 196–198 (DIM) constitute a propeptide, removed in mature form.

Belongs to the synaptobrevin family. Post-translationally, palmitoylated; catalyzes its own palmitoylation. Palmitoylation is required for Golgi targeting. Farnesylation is required for Golgi targeting.

The protein localises to the cytoplasm. The protein resides in the cytosol. It localises to the cytoplasmic vesicle membrane. Its subcellular location is the golgi apparatus membrane. Vesicular soluble NSF attachment protein receptor (v-SNARE) mediating vesicle docking and fusion to a specific acceptor cellular compartment. Functions in endoplasmic reticulum to Golgi transport; as part of a SNARE complex composed of GOSR1, GOSR2 and STX5. Functions in early/recycling endosome to TGN transport; as part of a SNARE complex composed of BET1L, GOSR1 and STX5. Has a S-palmitoyl transferase activity. This is Synaptobrevin homolog YKT6-B (ykt6-b) from Xenopus laevis (African clawed frog).